Reading from the N-terminus, the 465-residue chain is Cysteine--tRNA ligase (465 aa).

Position 27 (Cys-27) interacts with Zn(2+). The 'HIGH' region signature appears at 29 to 39; it reads PTVYDDAHLGH. The Zn(2+) site is built by Cys-207, His-237, and Glu-241. Positions 269–273 match the 'KMSKS' region motif; that stretch reads KMSKS. Lys-272 is an ATP binding site.

This sequence belongs to the class-I aminoacyl-tRNA synthetase family. In terms of assembly, monomer. The cofactor is Zn(2+).

It is found in the cytoplasm. The catalysed reaction is tRNA(Cys) + L-cysteine + ATP = L-cysteinyl-tRNA(Cys) + AMP + diphosphate. This chain is Cysteine--tRNA ligase, found in Helicobacter pylori (strain P12).